The chain runs to 206 residues: Small ribosomal subunit protein uS4 (206 aa).

One can recognise an S4 RNA-binding domain in the interval 96–159; the sequence is TRLDNVVYRM…KKQARISASL (64 aa).

It belongs to the universal ribosomal protein uS4 family. In terms of assembly, part of the 30S ribosomal subunit. Contacts protein S5. The interaction surface between S4 and S5 is involved in control of translational fidelity.

Functionally, one of the primary rRNA binding proteins, it binds directly to 16S rRNA where it nucleates assembly of the body of the 30S subunit. With S5 and S12 plays an important role in translational accuracy. In Shewanella violacea, this protein is Small ribosomal subunit protein uS4.